Reading from the N-terminus, the 576-residue chain is Putative export ATP-binding/permease protein RF_0214 (576 aa).

One can recognise an ABC transmembrane type-1 domain in the interval 20 to 303; sequence LIIVMISLLS…IFELLSEIHL (284 aa). 6 helical membrane-spanning segments follow: residues 21-41, 61-81, 135-155, 158-178, 242-262, and 277-297; these read IIVM…GSVF, ILYI…RSYF, FLSF…LMFF, FKLA…LIKF, ALFF…VVWI, and IISF…IFEL. An ABC transporter domain is found at 336-572; the sequence is IEFKNVDFTY…SEIYRNICRE (237 aa). ATP is bound at residue 371–378; that stretch reads GRSGGGKS.

It belongs to the ABC transporter superfamily. In terms of assembly, homodimer.

It is found in the cell inner membrane. Functionally, part of an ABC transporter complex. Transmembrane domains (TMD) form a pore in the inner membrane and the ATP-binding domain (NBD) is responsible for energy generation. This chain is Putative export ATP-binding/permease protein RF_0214, found in Rickettsia felis (strain ATCC VR-1525 / URRWXCal2) (Rickettsia azadi).